The sequence spans 678 residues: Protein CASP (678 aa).

At 1-619 (MAANVGSMSQ…LILSNKTART (619 aa)) the chain is on the cytoplasmic side. Coiled-coil stretches lie at residues 16 to 40 (DLQQLQRELDAAATVLANRQDESEQ), 67 to 374 (LLKS…TLKS), 427 to 454 (HLTEATAKAVEQKELIARLEQDLSTIQS), and 502 to 556 (LSII…FLQS). Ser-586 is subject to Phosphoserine. The helical; Anchor for type IV membrane protein transmembrane segment at 620–640 (IGFFYTLFLHCLVFLVLYKLA) threads the bilayer. Residues 641–678 (WSESVERDCAATCAKKFADHLHKFHESDNGAAAGDLWQ) are Lumenal-facing.

Belongs to the CASP family. In terms of assembly, homodimer; disulfide-linked. Interacts with GOLGA5. Ubiquitously expressed.

Its subcellular location is the golgi apparatus membrane. May be involved in intra-Golgi retrograde transport. The polypeptide is Protein CASP (Cux1) (Mus musculus (Mouse)).